Consider the following 1340-residue polypeptide: MWQFIRSRILTVIIFIGAAHGLLVVGPKFIRANQEYTLVISNFNSQLSKVDLLLKLEGETDNGLSVLNVTKMVDVRRNMNRMINFNMPEELTAGNYKITIDGQRGFSFHKEAELVYLSKSISGLIQVDKPVFKPGDTVNFRVILLDTELKPPARVKSVYVTIRDPQRNVIRKWSTAKLYAGVFESDLQIVPTPMLGVWNISVEVEGEELVSKTFEVKEYVLSTFDVQVMPSVIPLEEHQAVNLTIEANYHFGKPVQGVAKVELYLDDDKLNQKKELTVYGKGQVELRFDNFAMDADQQDVRVKVSFIEQYTNRTVVKQSQITVYRYAYRVELIKESPQFRPGLPFKCALQFTHHDGTPAKGITGKVEVSDVGFETTTTSDNDGLIKLELQPSEGTEQLGINFNAVDGFFFYEDVNKVETVTDAYIKLELKSPIKRNKLMRFMVTCTERMTFFVYYVMSKGNIIDAGFMRPNKQTKYLLQLNATEKMIPKAKILIATVAGRTVVYDYADLDFQELRNNFDLSIDEQEIKPGRQIELSMSGRPGAYVGLAAYDKALLLFNKNHDLFWEDIGQVFDGFHAINENEFDIFHSLGLFARTLDDILFDSANEKTGRNALQSGKPIGKLVSYRTNFQESWLWKNVSIGRSGSRKLIEVVPDTTTSWYLTGFSIDPVYGLGIIKKPIQFTTVQPFYIVENLPYSIKRGEAVVLQFTLFNNLGAEYIADVTLYNVANQTEFVGRPDTDLSYTKSVSVPPKVGVPISFLIKARKLGEMAVRVKASIMLGHETDALEKVIRVMPESLAQPKMDTSFFCFDDYKNQTFPFNLDINKKADNGSKKIEFRLNPNLLTMVIKNLDNLLAVPTGCGEQNMVKFVPNILVLDYLYATGSKEQHLIDKATNLLRQGYQNQMRYRQTDGSFGVWEKSGSSVFLTAFVATSMQTASKYMNDIDAAMVEKALDWLASKQHSSGRFDETGKVWHKDMQGGLRNGVALTSYVLTALLENDIAKVKHAVVIQNGMNYLSNQLAFINNPYDLSIATYAMMLNGHTMKKEALDKLIDMSISDNNKKERYWGTTNQIETTAYALLSFVMAEKYLDGIPVMNWLVNQRYVTGSFPRTQDTFVGLKALTKLAEKISPSRNDYTVQLKYKKNTKYFNINSEQIDVQNFLEIPEDTKKLEINVGGIGFGLLEVIYQFDLNLVNFEHRFKLDLEKQNTGSDYELRLRVCANYIPELTDSQSNMALIEVTLPSGYVVDRNPISEQTTVNPIQNMEIRYGGTSVVLYYYKMGTERNCFTVTAYRRFKVALKRPAYVVVYDYYNTNLNAIKVYEVDKQNVCEICEEEDCPAECKK.

The signal sequence occupies residues methionine 1–glycine 21. Residues asparagine 68, asparagine 199, asparagine 242, asparagine 312, and asparagine 481 are each glycosylated (N-linked (GlcNAc...) asparagine). The tract at residues glutamate 580–glycine 609 is may contain the cleavage site. N-linked (GlcNAc...) asparagine glycosylation is found at asparagine 637, asparagine 728, asparagine 813, and asparagine 828. The isoglutamyl cysteine thioester (Cys-Gln) cross-link spans cysteine 859–glutamine 862. 3 disulfide bridges follow: cysteine 1217–cysteine 1283, cysteine 1326–cysteine 1338, and cysteine 1329–cysteine 1334.

As to quaternary structure, heterodimer of a TEP1-N chain and an TEP1-C chain non-covalently linked. Forms a complex composed of TEP1-N and TEP1-C heterodimer, LRIM1 and APL1C; the interaction stabilizes TEP1-N and TEP1-C heterodimer, prevents its binding to tissues while circulating in the hemolymph and protects the thioester bond from hydrolysis. Mature TEP1 and to a lesser extent full-length TEP1 interact with SPCLIP1; the interaction is induced by microbial infection. Post-translationally, in the hemolymph, the full-length protein is cleaved by an unknow protease into a 75kDa N-terminal (TEP1-N) chain and an 80kDa C-terminal (TEP1-C) chain which remain non-covalently linked. The TEP1-C chain contains the thioester bond which covalently binds to the pathogen surface. Cleavage is induced by bacterial infection or aseptic wound injury. During embryonic and pupal development, the cleaved form is the predominant form. N-glycosylated. As to expression, specifically expressed in hemocytes (at protein level).

Its subcellular location is the secreted. Its function is as follows. Plays an essential role in the innate immune response to bacteria and protozoa infection. After proteolytic cleavage, the protein C-terminus binds covalently through a thioester bond to the pathogen surface resulting in pathogen clearance either by melanization or lysis. Initiate the recruitment and activation of a cascade of proteases, mostly of CLIP-domain serine proteases, which leads to the proteolytic cleavage of the prophenoloxidase (PPO) into active phenoloxidase (PO), the rate-limiting enzyme in melanin biosynthesis. In response to parasite P.berghei-mediated infection, binds to and mediates killing of ookinetes, as they egress from midgut epithelial cells into the basal labyrinth, by both lysis and melanization. During bacterial infection, binds to both Gram-positive and Gram-negative bacteria but only promotes phagocytosis of Gram-negative bacteria. Promotes the accumulation of SPCLIP1 onto the surface of P.berghei ookinetes and bacterium E.coli which leads to the melanization of the pathogen. Recruits CLIPA2 to bacteria surface. In response to bacterial infection, required for periostial hemocyte aggregation, but not for the aggregation of sessile hemocytes in non-periostial regions. During the late stage of fungus B.bassiana-mediated infection, required for the initiation of hyphae melanization by binding to the surface of hyphae and recruiting prophenoloxidase PPO to them. Plays a role in male fertility by binding to defective sperm cells and promoting their removal during spermatogenesis. In terms of biological role, binds covalently through a thioester bond to the pathogen surface resulting in pathogen clearance. This Anopheles gambiae (African malaria mosquito) protein is Thioester-containing protein 1 allele S1.